The chain runs to 468 residues: Protein maelstrom 2 (468 aa).

The segment at residues 2–69 (PPKKHSGFMM…LTRVKKERLN (68 aa)) is a DNA-binding region (HMG box). The segment at 374 to 393 (KEDSPTVLSPASSRRSLASS) is disordered. The segment covering 381–393 (LSPASSRRSLASS) has biased composition (low complexity).

This sequence belongs to the maelstrom family.

It is found in the cytoplasm. The protein resides in the nucleus. In terms of biological role, involved both in the piRNA and miRNA metabolic processes. As a component of the meiotic nuage, plays a central role during oogenesis by repressing transposable elements and preventing their mobilization, which is essential for the germline integrity. Repression of transposable elements is mediated via the piRNA metabolic process, which mediates the repression of transposable elements during meiosis by forming complexes composed of piRNAs and Piwi proteins and governs the repression of transposons. As a nuclear component, it is required for proper differentiation in the germline stem cell (GSC) lineage by repressing microRNA-7 (miR-7), thereby acting as an indirect regulator of bag-of-marbles (Bam). Acts by binding to the promoter of miR-7 gene and repressing its expression; miR-7 repression alleviates the Bam repression by miR-7, thereby allowing differentiation in the germline stem cell (GSC) lineage. The polypeptide is Protein maelstrom 2 (mael2) (Drosophila ananassae (Fruit fly)).